The sequence spans 199 residues: uncharacterized protein (199 aa).

The protein to M.jannaschii MJ1356.

This is an uncharacterized protein from Methanocaldococcus jannaschii (strain ATCC 43067 / DSM 2661 / JAL-1 / JCM 10045 / NBRC 100440) (Methanococcus jannaschii).